The following is an 89-amino-acid chain: Small ribosomal subunit protein uS15 (89 aa).

It belongs to the universal ribosomal protein uS15 family. In terms of assembly, part of the 30S ribosomal subunit. Forms a bridge to the 50S subunit in the 70S ribosome, contacting the 23S rRNA.

Its function is as follows. One of the primary rRNA binding proteins, it binds directly to 16S rRNA where it helps nucleate assembly of the platform of the 30S subunit by binding and bridging several RNA helices of the 16S rRNA. Forms an intersubunit bridge (bridge B4) with the 23S rRNA of the 50S subunit in the ribosome. The polypeptide is Small ribosomal subunit protein uS15 (Coxiella burnetii (strain CbuK_Q154) (Coxiella burnetii (strain Q154))).